The following is an 838-amino-acid chain: pre-rRNA 2'-O-ribose RNA methyltransferase FTSJ3 (838 aa).

G56, W58, D76, D92, and D117 together coordinate S-adenosyl-L-methionine. K157 (proton acceptor) is an active-site residue. Residues 332 to 367 form a disordered region; that stretch reads ISLSSEEEEEGDEEEAVAETKQAPEEEEEREEEQLN. Residues S333, S335, and S336 each carry the phosphoserine modification. Residues 336 to 348 are compositionally biased toward acidic residues; that stretch reads SEEEEEGDEEEAV. R390 carries the post-translational modification Citrulline. The interval 453-482 is disordered; that stretch reads IYVSDAEDDDDTSLESDLDPEELAGVRTHS. The segment covering 457 to 474 has biased composition (acidic residues); sequence DAEDDDDTSLESDLDPEE. A phosphoserine mark is found at S532 and S545. A disordered region spans residues 537–639; the sequence is DADEALEISQ…GRGSKADEDG (103 aa). A Glycyl lysine isopeptide (Lys-Gly) (interchain with G-Cter in SUMO2) cross-link involves residue K571. Phosphoserine is present on S576. Residues K634 and K650 each participate in a glycyl lysine isopeptide (Lys-Gly) (interchain with G-Cter in SUMO2) cross-link. Position 667 is a phosphoserine (S667). K669 participates in a covalent cross-link: Glycyl lysine isopeptide (Lys-Gly) (interchain with G-Cter in SUMO2). S679 is subject to Phosphoserine. K701 is covalently cross-linked (Glycyl lysine isopeptide (Lys-Gly) (interchain with G-Cter in SUMO2)). Residues 730-768 are a coiled coil; the sequence is IKKVAEAKARKKRRVLKKLEQTKKKAEAVVNTVDISERE. R774 bears the Citrulline mark. Basic residues predominate over residues 802–812; the sequence is VRRPAGVKGHF. The interval 802 to 838 is disordered; sequence VRRPAGVKGHFKVVDSRMKKDQRAQQRKEQKKKHKRK. Over residues 813–829 the composition is skewed to basic and acidic residues; the sequence is KVVDSRMKKDQRAQQRK.

It belongs to the class I-like SAM-binding methyltransferase superfamily. RNA methyltransferase RlmE family. SPB1 subfamily. Interacts with NIP7. Citrullinated by PADI4.

It localises to the nucleus. The protein resides in the nucleolus. The enzyme catalyses a ribonucleotide in rRNA + S-adenosyl-L-methionine = a 2'-O-methylribonucleotide in rRNA + S-adenosyl-L-homocysteine + H(+). Functionally, RNA 2'-O-methyltransferase involved in the processing of the 34S pre-rRNA to 18S rRNA and in 40S ribosomal subunit formation. This chain is pre-rRNA 2'-O-ribose RNA methyltransferase FTSJ3 (Ftsj3), found in Mus musculus (Mouse).